The following is a 68-amino-acid chain: Large ribosomal subunit protein uL29 (68 aa).

This sequence belongs to the universal ribosomal protein uL29 family.

The chain is Large ribosomal subunit protein uL29 from Maricaulis maris (strain MCS10) (Caulobacter maris).